We begin with the raw amino-acid sequence, 490 residues long: Patellin-3 (490 aa).

Positions Met-1–Pro-17 are enriched in low complexity. The interval Met-1 to Asn-121 is disordered. An N-acetylalanine modification is found at Ala-2. Over residues Pro-19 to Ala-33 the composition is skewed to polar residues. The segment covering Glu-46–Thr-56 has biased composition (low complexity). Composition is skewed to basic and acidic residues over residues Thr-57–Pro-69 and Ser-79–Ser-100. Ser-108 is modified (phosphoserine). Basic and acidic residues predominate over residues Phe-109 to Asn-121. A Glycyl lysine isopeptide (Lys-Gly) (interchain with G-Cter in ubiquitin) cross-link involves residue Lys-193. The 176-residue stretch at Glu-202–Cys-377 folds into the CRAL-TRIO domain. In terms of domain architecture, GOLD spans Ala-353–Val-487.

This sequence belongs to the patellin family.

It localises to the membrane. Its subcellular location is the cytoplasm. Functionally, carrier protein that may be involved in membrane-trafficking events associated with cell plate formation during cytokinesis. Binds to some hydrophobic molecules such as phosphoinositides and promotes their transfer between the different cellular sites. The protein is Patellin-3 (PATL3) of Arabidopsis thaliana (Mouse-ear cress).